The following is a 1260-amino-acid chain: uncharacterized protein (1260 aa).

The protein resides in the plastid. The protein localises to the chloroplast. This is an uncharacterized protein from Ostreococcus tauri.